A 375-amino-acid chain; its full sequence is Histidine biosynthesis bifunctional protein HisB (375 aa).

The histidinol-phosphatase stretch occupies residues 1 to 168 (MTPILFVDRD…GIAHELADAP (168 aa)). Asp8 acts as the Nucleophile in catalysis. Mg(2+) is bound by residues Asp8, Asp10, and Asp128. The Proton donor role is filled by Asp10. The interval 169–375 (RRAVVQRNTK…TALPTTKGAL (207 aa)) is imidazoleglycerol-phosphate dehydratase.

The protein in the N-terminal section; belongs to the histidinol-phosphatase family. This sequence in the C-terminal section; belongs to the imidazoleglycerol-phosphate dehydratase family. Mg(2+) serves as cofactor.

The protein localises to the cytoplasm. The catalysed reaction is D-erythro-1-(imidazol-4-yl)glycerol 3-phosphate = 3-(imidazol-4-yl)-2-oxopropyl phosphate + H2O. It catalyses the reaction L-histidinol phosphate + H2O = L-histidinol + phosphate. The protein operates within amino-acid biosynthesis; L-histidine biosynthesis; L-histidine from 5-phospho-alpha-D-ribose 1-diphosphate: step 6/9. It functions in the pathway amino-acid biosynthesis; L-histidine biosynthesis; L-histidine from 5-phospho-alpha-D-ribose 1-diphosphate: step 8/9. The protein is Histidine biosynthesis bifunctional protein HisB of Xanthomonas euvesicatoria pv. vesicatoria (strain 85-10) (Xanthomonas campestris pv. vesicatoria).